Consider the following 367-residue polypeptide: Anthranilate phosphoribosyltransferase (367 aa).

Low complexity predominate over residues 1-17 (MVLSSEASSAADHSAAA). Positions 1-22 (MVLSSEASSAADHSAAAPIPTS) are disordered. Residues Gly-104, 107-108 (GD), Thr-112, 114-117 (NLST), 132-140 (KHGNRAASS), and Gly-144 each bind 5-phospho-alpha-D-ribose 1-diphosphate. An anthranilate-binding site is contributed by Gly-104. Position 116 (Ser-116) interacts with Mg(2+). Residue Asn-135 participates in anthranilate binding. Arg-190 contributes to the anthranilate binding site. The Mg(2+) site is built by Asp-248 and Glu-249.

This sequence belongs to the anthranilate phosphoribosyltransferase family. Homodimer. Mg(2+) is required as a cofactor.

It carries out the reaction N-(5-phospho-beta-D-ribosyl)anthranilate + diphosphate = 5-phospho-alpha-D-ribose 1-diphosphate + anthranilate. It participates in amino-acid biosynthesis; L-tryptophan biosynthesis; L-tryptophan from chorismate: step 2/5. Functionally, catalyzes the transfer of the phosphoribosyl group of 5-phosphorylribose-1-pyrophosphate (PRPP) to anthranilate to yield N-(5'-phosphoribosyl)-anthranilate (PRA). This is Anthranilate phosphoribosyltransferase from Mycobacterium marinum (strain ATCC BAA-535 / M).